The sequence spans 77 residues: Putative neurotoxin 1 (77 aa).

An N-terminal signal peptide occupies residues 1-25 (MKAFIVILSIAIVLLLIVSIKETSA). A propeptide spanning residues 26-46 (KDCKQECVKRYTKGDLTNFLK) is cleaved from the precursor.

This sequence belongs to the scolopendra neurotoxin 3 family. Post-translationally, contains 2 disulfide bonds. Expressed by the venom gland.

It localises to the secreted. This Scolopendra subspinipes (Vietnamese centipede) protein is Putative neurotoxin 1.